The sequence spans 217 residues: Oxygen-evolving enhancer protein 3, chloroplastic (217 aa).

Disordered stretches follow at residues Met1 to Gly25 and Pro73 to Ala95. Residues Met1 to Ala63 constitute a chloroplast transit peptide.

Belongs to the PsbQ family.

It localises to the plastid. Its subcellular location is the chloroplast thylakoid membrane. The chain is Oxygen-evolving enhancer protein 3, chloroplastic from Oryza sativa subsp. indica (Rice).